A 461-amino-acid chain; its full sequence is MSGKSIFDKLWDRHVITGKEGEPQLMYVDQHYIHEVTSPQAFQGLRDAGRKVRRPDLTFGTFDHNVPTVNIYDIRDVISKAQMDALARNVIEFNIPHADHGSENQGIVHMVGPETGRTQPGKFIVCGDSHTATHGAFGAIGFGIGTTEVEHVFATQTIWQVKPKKLLVKFTGKPQKGVYSKDYILALIAKYGVALGVGYVVEYIGDAVDALSMEERMTICNMSIEFGSKMGIMNPDQKTFDYLKNKACVPEDFETAVADWKTLVSDEDAHYDKVIELDVSQLAPMVTWGTNPSMGVAFGQAFPDIRDMNDKRAYDYMDMKPGQTAEDIELGYVFLGSCTNARLSDLKVAAKYVAGKHIAPNLTAIVVPGSRPVKQAAEKIGLDKIFLDAGFEWRDPGCSMCLGMNPDKVPEGMHCASTSNRNFEDRQGVGAKTHLCSPAMAAAAAIAGRFIDVRQLPEAQV.

3 residues coordinate [4Fe-4S] cluster: cysteine 338, cysteine 398, and cysteine 401.

Belongs to the aconitase/IPM isomerase family. LeuC type 1 subfamily. Heterodimer of LeuC and LeuD. [4Fe-4S] cluster serves as cofactor.

The enzyme catalyses (2R,3S)-3-isopropylmalate = (2S)-2-isopropylmalate. The protein operates within amino-acid biosynthesis; L-leucine biosynthesis; L-leucine from 3-methyl-2-oxobutanoate: step 2/4. Functionally, catalyzes the isomerization between 2-isopropylmalate and 3-isopropylmalate, via the formation of 2-isopropylmaleate. In Streptococcus mutans serotype c (strain ATCC 700610 / UA159), this protein is 3-isopropylmalate dehydratase large subunit.